A 187-amino-acid polypeptide reads, in one-letter code: Ribosome-recycling factor (187 aa).

Belongs to the RRF family.

The protein localises to the cytoplasm. Its function is as follows. Responsible for the release of ribosomes from messenger RNA at the termination of protein biosynthesis. May increase the efficiency of translation by recycling ribosomes from one round of translation to another. This Lactiplantibacillus plantarum (strain ATCC BAA-793 / NCIMB 8826 / WCFS1) (Lactobacillus plantarum) protein is Ribosome-recycling factor.